Reading from the N-terminus, the 319-residue chain is Cytochrome f (319 aa).

The signal sequence occupies residues 1 to 35 (METRNIFSWIKEQITRSISVSLMIYIITRTAVSNA). Heme-binding residues include Y36, C56, C59, and H60. The helical transmembrane segment at 285–305 (VQGLLFFLASVILAQIFLVLK) threads the bilayer.

This sequence belongs to the cytochrome f family. As to quaternary structure, the 4 large subunits of the cytochrome b6-f complex are cytochrome b6, subunit IV (17 kDa polypeptide, petD), cytochrome f and the Rieske protein, while the 4 small subunits are PetG, PetL, PetM and PetN. The complex functions as a dimer. Heme serves as cofactor.

It localises to the plastid. The protein resides in the chloroplast thylakoid membrane. Component of the cytochrome b6-f complex, which mediates electron transfer between photosystem II (PSII) and photosystem I (PSI), cyclic electron flow around PSI, and state transitions. In Coffea arabica (Arabian coffee), this protein is Cytochrome f.